The following is a 307-amino-acid chain: Auxiliary protein GraX (307 aa).

As to quaternary structure, homodimer. Interacts with GraR and GraS.

In terms of biological role, plays a role in resistance against cationic antimicrobial peptides (CAMPs). Facilitates the activation of GraS to transduce the signal to GraR. This is Auxiliary protein GraX (graX) from Staphylococcus aureus (strain NCTC 8325 / PS 47).